The primary structure comprises 250 residues: Kallikrein-9 (250 aa).

Positions 1 to 15 are cleaved as a signal peptide; the sequence is MKLGLLCALLSLLAG. The region spanning 23–249 is the Peptidase S1 domain; that stretch reads AIGAEECRPN…YLDWIQEIME (227 aa). 6 disulfide bridges follow: Cys29/Cys164, Cys48/Cys64, Cys136/Cys238, Cys143/Cys210, Cys175/Cys189, and Cys200/Cys225. Active-site charge relay system residues include His63 and Asp111. N-linked (GlcNAc...) asparagine glycans are attached at residues Asn131 and Asn166. Ser204 functions as the Charge relay system in the catalytic mechanism. Asn211 carries N-linked (GlcNAc...) asparagine glycosylation.

This sequence belongs to the peptidase S1 family. Kallikrein subfamily. In terms of tissue distribution, skin, thymus, trachea, cerebellum and spinal cord.

The protein resides in the secreted. This is Kallikrein-9 (KLK9) from Homo sapiens (Human).